The sequence spans 188 residues: uncharacterized protein (188 aa).

The span at 1–15 shows a compositional bias: basic and acidic residues; it reads MVSSKDKIKEELKQE. The tract at residues 1–21 is disordered; it reads MVSSKDKIKEELKQEEPEENV.

This is an uncharacterized protein from Saccharolobus islandicus (Sulfolobus islandicus).